Reading from the N-terminus, the 351-residue chain is Nicotinate-nucleotide--dimethylbenzimidazole phosphoribosyltransferase (351 aa).

Glu313 functions as the Proton acceptor in the catalytic mechanism.

The protein belongs to the CobT family.

It catalyses the reaction 5,6-dimethylbenzimidazole + nicotinate beta-D-ribonucleotide = alpha-ribazole 5'-phosphate + nicotinate + H(+). The protein operates within nucleoside biosynthesis; alpha-ribazole biosynthesis; alpha-ribazole from 5,6-dimethylbenzimidazole: step 1/2. Functionally, catalyzes the synthesis of alpha-ribazole-5'-phosphate from nicotinate mononucleotide (NAMN) and 5,6-dimethylbenzimidazole (DMB). The protein is Nicotinate-nucleotide--dimethylbenzimidazole phosphoribosyltransferase of Mycobacterium leprae (strain Br4923).